The sequence spans 255 residues: F-box/SPRY domain-containing protein 1 (255 aa).

Residues 3-51 (DPVAALCNYNVLEVIFSYLELEDLSHCSQVCKSWYHFLNDENSDVWRWH) enclose the F-box domain. Residues 61-253 (LKSDLLSSVS…VSMVYLGTPL (193 aa)) enclose the B30.2/SPRY domain.

Belongs to the FBXO45/Fsn family. As to quaternary structure, component of an E3 ubiquitin ligase complex composed of hiw and Fsn.

The protein localises to the synapse. Its pathway is protein modification; protein ubiquitination. Required in the presynaptic motoneuron to down-regulate the levels of wnd and restrain synaptic terminal growth at the neuromuscular junction (NMJ). The sequence is that of F-box/SPRY domain-containing protein 1 from Drosophila erecta (Fruit fly).